The chain runs to 399 residues: Tyrosine--tRNA ligase 2 (399 aa).

Positions proline 43–histidine 52 match the 'HIGH' region motif. Positions lysine 227 to serine 231 match the 'KMSKS' region motif. Lysine 230 provides a ligand contact to ATP. In terms of domain architecture, S4 RNA-binding spans isoleucine 338–glycine 398.

The protein belongs to the class-I aminoacyl-tRNA synthetase family. TyrS type 2 subfamily. As to quaternary structure, homodimer.

Its subcellular location is the cytoplasm. The catalysed reaction is tRNA(Tyr) + L-tyrosine + ATP = L-tyrosyl-tRNA(Tyr) + AMP + diphosphate + H(+). Its function is as follows. Catalyzes the attachment of tyrosine to tRNA(Tyr) in a two-step reaction: tyrosine is first activated by ATP to form Tyr-AMP and then transferred to the acceptor end of tRNA(Tyr). The sequence is that of Tyrosine--tRNA ligase 2 from Photorhabdus laumondii subsp. laumondii (strain DSM 15139 / CIP 105565 / TT01) (Photorhabdus luminescens subsp. laumondii).